The sequence spans 281 residues: Translation initiation factor IF3-4, chloroplastic (281 aa).

The transit peptide at 1-51 (MAGITSTVGFNAILAGATKTVSHPVKSKLFGLRLCVPEFSIVSLSPYHHRR) directs the protein to the chloroplast. Disordered stretches follow at residues 63-86 (GGGGSRFPGDRRGRQKESEDDDSL) and 253-281 (KVQEPPPKKKKKPADDKVSAANITATQDI). 2 stretches are compositionally biased toward basic and acidic residues: residues 70 to 79 (PGDRRGRQKE) and 253 to 270 (KVQEPPPKKKKKPADDKV).

This sequence belongs to the IF-3 family. As to quaternary structure, monomer.

It is found in the plastid. It localises to the chloroplast. Its function is as follows. Chloroplast translation initiation factor that is essential for the coordination of leaf and chloroplast development. IF-3 binds to the 30S ribosomal subunit and shifts the equilibrium between 70S ribosomes and their 50S and 30S subunits in favor of the free subunits, thus enhancing the availability of 30S subunits on which protein synthesis initiation begins. This is Translation initiation factor IF3-4, chloroplastic from Arabidopsis thaliana (Mouse-ear cress).